Consider the following 231-residue polypeptide: Putative N-acetylmannosamine-6-phosphate 2-epimerase (231 aa).

It belongs to the NanE family.

The catalysed reaction is an N-acyl-D-glucosamine 6-phosphate = an N-acyl-D-mannosamine 6-phosphate. It participates in amino-sugar metabolism; N-acetylneuraminate degradation; D-fructose 6-phosphate from N-acetylneuraminate: step 3/5. Functionally, converts N-acetylmannosamine-6-phosphate (ManNAc-6-P) to N-acetylglucosamine-6-phosphate (GlcNAc-6-P). This is Putative N-acetylmannosamine-6-phosphate 2-epimerase from Latilactobacillus sakei subsp. sakei (strain 23K) (Lactobacillus sakei subsp. sakei).